A 715-amino-acid chain; its full sequence is Poly(A) polymerase alpha-A (715 aa).

ATP contacts are provided by residues 82 to 84 (FGP), T91, 95 to 97 (DID), D149, K210, Y219, and 228 to 229 (GV). Mg(2+)-binding residues include D95, D97, and D149. The Nuclear localization signal 1 motif lies at 472-489 (RKQLHQLQPSHVSPKKKK). Disordered regions lie at residues 510–543 (DSDN…PAAP), 560–590 (QNNS…TPKP), and 607–693 (KPVS…DLSD). Polar residues-rich tracts occupy residues 515–539 (MSVP…QGNS) and 560–588 (QNNS…SSTP). Positions 624–639 (KRTSSPSNEDSPKKNK) match the Nuclear localization signal 2 motif. Over residues 655–673 (DQNKLETEELKEVHSEEKS) the composition is skewed to basic and acidic residues. A compositionally biased stretch (polar residues) spans 674–692 (SSPVPGSLPFSQQSSTDLS).

This sequence belongs to the poly(A) polymerase family. As to quaternary structure, monomer. It depends on Mg(2+) as a cofactor. The cofactor is Mn(2+).

The protein localises to the nucleus. The catalysed reaction is RNA(n) + ATP = RNA(n)-3'-adenine ribonucleotide + diphosphate. Functionally, polymerase that creates the 3'-poly(A) tail of mRNA's. May acquire specificity through interaction with a cleavage and polyadenylation factor (CPSF). The sequence is that of Poly(A) polymerase alpha-A (papola-a) from Xenopus laevis (African clawed frog).